The chain runs to 371 residues: Deoxyuridine 5'-triphosphate nucleotidohydrolase (371 aa).

Substrate-binding positions include 260-262 (RSS) and 366-367 (FG). Residues 350–371 (NEFDAEAPPSERGTGGFGSTGI) form a disordered region. The span at 362–371 (GTGGFGSTGI) shows a compositional bias: gly residues.

Belongs to the dUTPase family. Mg(2+) serves as cofactor.

It catalyses the reaction dUTP + H2O = dUMP + diphosphate + H(+). Involved in nucleotide metabolism: produces dUMP, the immediate precursor of thymidine nucleotides and decreases the intracellular concentration of dUTP to avoid uracil incorporation into viral DNA. The sequence is that of Deoxyuridine 5'-triphosphate nucleotidohydrolase from Homo sapiens (Human).